Reading from the N-terminus, the 103-residue chain is Cell division protein FtsB (103 aa).

Over 1–3 (MGK) the chain is Cytoplasmic. A helical transmembrane segment spans residues 4–21 (LTLLLLALLVWLQYSLWF). The Periplasmic segment spans residues 22–103 (GKNGIHDYSR…RAATAGQTHR (82 aa)). Residues 33–62 (NDDVVAQQATNAKLKARNDQLFAEIDDLNG) adopt a coiled-coil conformation.

It belongs to the FtsB family. In terms of assembly, part of a complex composed of FtsB, FtsL and FtsQ.

The protein localises to the cell inner membrane. Functionally, essential cell division protein. May link together the upstream cell division proteins, which are predominantly cytoplasmic, with the downstream cell division proteins, which are predominantly periplasmic. The protein is Cell division protein FtsB of Salmonella agona (strain SL483).